The chain runs to 248 residues: PF03932 family protein CutC (248 aa).

This sequence belongs to the CutC family.

The protein localises to the cytoplasm. The sequence is that of PF03932 family protein CutC from Porphyromonas gingivalis (strain ATCC BAA-308 / W83).